The following is a 233-amino-acid chain: Ras-related protein RABA6a (233 aa).

20 to 27 contacts GTP; that stretch reads GDSAVGKS. Positions 42–50 match the Effector region motif; sequence SKPTIGVEF. GTP is bound by residues 68 to 72, 126 to 129, and 156 to 157; these read DTAGQ, NKSD, and SA. Residues Cys-230 and Cys-231 are each lipidated (S-geranylgeranyl cysteine).

This sequence belongs to the small GTPase superfamily. Rab family.

The protein resides in the cell membrane. Functionally, intracellular vesicle trafficking and protein transport. This is Ras-related protein RABA6a (RABA6A) from Arabidopsis thaliana (Mouse-ear cress).